Consider the following 148-residue polypeptide: Protein-arginine-phosphatase (148 aa).

C9 (nucleophile) is an active-site residue. 10-15 (TGNTCR) is a substrate binding site. The active site involves R15. D117 functions as the Proton donor in the catalytic mechanism.

It belongs to the low molecular weight phosphotyrosine protein phosphatase family. In terms of assembly, is present in solution as a mixture of monomers, dimers and higher order oligomers (trimers and tetramers).

It carries out the reaction N(omega)-phospho-L-arginyl-[protein] + H2O = L-arginyl-[protein] + phosphate. Its activity is regulated as follows. Irreversibly inhibited by the synthetic inhibitor cyc-SeCN-amidine, which inactivates the enzyme by inducing disulfide bond formation between the two active site cysteine residues Cys-9 and Cys-14. Catalyzes the specific dephosphorylation of phosphoarginine residues in proteins. Probably counteracts the protein arginine kinase McsB in vivo. Exhibits almost no activity against pTyr peptides. Protein arginine phosphorylation has a physiologically important role and is involved in the regulation of many critical cellular processes, such as protein homeostasis, motility, competence, and stringent and stress responses, by regulating gene expression and protein activity. This Geobacillus stearothermophilus (Bacillus stearothermophilus) protein is Protein-arginine-phosphatase (ywle).